Consider the following 589-residue polypeptide: Isocitrate dehydrogenase kinase/phosphatase (589 aa).

Residues 317–323 (AAGIKGM) and K338 each bind ATP. D373 is a catalytic residue.

The protein belongs to the AceK family.

The protein localises to the cytoplasm. The enzyme catalyses L-seryl-[isocitrate dehydrogenase] + ATP = O-phospho-L-seryl-[isocitrate dehydrogenase] + ADP + H(+). In terms of biological role, bifunctional enzyme which can phosphorylate or dephosphorylate isocitrate dehydrogenase (IDH) on a specific serine residue. This is a regulatory mechanism which enables bacteria to bypass the Krebs cycle via the glyoxylate shunt in response to the source of carbon. When bacteria are grown on glucose, IDH is fully active and unphosphorylated, but when grown on acetate or ethanol, the activity of IDH declines drastically concomitant with its phosphorylation. This is Isocitrate dehydrogenase kinase/phosphatase from Colwellia psychrerythraea (strain 34H / ATCC BAA-681) (Vibrio psychroerythus).